Here is a 44-residue protein sequence, read N- to C-terminus: MRDLKTYLSVAPVLSTLWFGALAGLLIEINRFFPDALTFPFFSF.

A helical transmembrane segment spans residues tyrosine 7–isoleucine 27.

Belongs to the PsaJ family.

Its subcellular location is the plastid. The protein localises to the chloroplast thylakoid membrane. Its function is as follows. May help in the organization of the PsaE and PsaF subunits. In Solanum bulbocastanum (Wild potato), this protein is Photosystem I reaction center subunit IX.